Here is a 496-residue protein sequence, read N- to C-terminus: Probable cytosol aminopeptidase (496 aa).

K258 and D263 together coordinate Mn(2+). K270 is a catalytic residue. Residues D281, D340, and E342 each coordinate Mn(2+). R344 is an active-site residue.

It belongs to the peptidase M17 family. Mn(2+) is required as a cofactor.

The protein resides in the cytoplasm. It catalyses the reaction Release of an N-terminal amino acid, Xaa-|-Yaa-, in which Xaa is preferably Leu, but may be other amino acids including Pro although not Arg or Lys, and Yaa may be Pro. Amino acid amides and methyl esters are also readily hydrolyzed, but rates on arylamides are exceedingly low.. The catalysed reaction is Release of an N-terminal amino acid, preferentially leucine, but not glutamic or aspartic acids.. Its function is as follows. Presumably involved in the processing and regular turnover of intracellular proteins. Catalyzes the removal of unsubstituted N-terminal amino acids from various peptides. This chain is Probable cytosol aminopeptidase, found in Helicobacter pylori (strain HPAG1).